Consider the following 381-residue polypeptide: Spindlin interactor and repressor of chromatin-binding protein (381 aa).

The interval 42–73 (RVTQQEKTPPPRPSPLEAGSDGCEEPKQQVSW) is disordered. A Glycyl lysine isopeptide (Lys-Gly) (interchain with G-Cter in SUMO2) cross-link involves residue Lys48. Phosphoserine is present on residues Ser121 and Ser148. 3 disordered regions span residues 144–264 (AEQP…EVRH), 283–320 (QLRG…LRGT), and 339–381 (LQDW…GNGV). Residues Lys189 and Lys220 each participate in a glycyl lysine isopeptide (Lys-Gly) (interchain with G-Cter in SUMO2) cross-link. Basic and acidic residues predominate over residues 218 to 228 (RWKEPPGEEPV). Ser248 and Ser251 each carry phosphoserine. Positions 287–299 (PDSKDSPKDREVA) are enriched in basic and acidic residues. Glycyl lysine isopeptide (Lys-Gly) (interchain with G-Cter in SUMO2) cross-links involve residues Lys290 and Lys294. A phosphoserine mark is found at Ser308 and Ser310. A Glycyl lysine isopeptide (Lys-Gly) (interchain with G-Cter in SUMO2) cross-link involves residue Lys374.

As to quaternary structure, interacts with SPIN1, SPIN2A, SPIN2B, SPIN3 and SPIN4. Interacts with TCF7L2 in a SPIN1-dependent manner. Interacts with PARP1; promoting PARP1 ADP-ribosyltransferase activity.

The protein localises to the nucleus. Its subcellular location is the chromosome. Its function is as follows. Chromatin protein that stabilizes SPIN1 and enhances its association with histone H3 trimethylated at both 'Lys-4' and 'Lys-9' (H3K4me3K9me3). Positively regulates poly-ADP-ribosylation in response to DNA damage; acts by facilitating PARP1 ADP-ribosyltransferase activity. The polypeptide is Spindlin interactor and repressor of chromatin-binding protein (Homo sapiens (Human)).